Reading from the N-terminus, the 179-residue chain is Large ribosomal subunit protein uL5 (179 aa).

It belongs to the universal ribosomal protein uL5 family. As to quaternary structure, part of the 50S ribosomal subunit; part of the 5S rRNA/L5/L18/L25 subcomplex. Contacts the 5S rRNA and the P site tRNA. Forms a bridge to the 30S subunit in the 70S ribosome.

In terms of biological role, this is one of the proteins that bind and probably mediate the attachment of the 5S RNA into the large ribosomal subunit, where it forms part of the central protuberance. In the 70S ribosome it contacts protein S13 of the 30S subunit (bridge B1b), connecting the 2 subunits; this bridge is implicated in subunit movement. Contacts the P site tRNA; the 5S rRNA and some of its associated proteins might help stabilize positioning of ribosome-bound tRNAs. This is Large ribosomal subunit protein uL5 from Shewanella denitrificans (strain OS217 / ATCC BAA-1090 / DSM 15013).